We begin with the raw amino-acid sequence, 82 residues long: Small ribosomal subunit protein bS16 (82 aa).

It belongs to the bacterial ribosomal protein bS16 family.

The chain is Small ribosomal subunit protein bS16 from Desulfosudis oleivorans (strain DSM 6200 / JCM 39069 / Hxd3) (Desulfococcus oleovorans).